We begin with the raw amino-acid sequence, 394 residues long: Phosphopentomutase (394 aa).

Mn(2+) contacts are provided by Asp-14, Asp-287, His-292, Asp-328, His-329, and His-340.

It belongs to the phosphopentomutase family. Requires Mn(2+) as cofactor.

It localises to the cytoplasm. The enzyme catalyses 2-deoxy-alpha-D-ribose 1-phosphate = 2-deoxy-D-ribose 5-phosphate. It carries out the reaction alpha-D-ribose 1-phosphate = D-ribose 5-phosphate. Its pathway is carbohydrate degradation; 2-deoxy-D-ribose 1-phosphate degradation; D-glyceraldehyde 3-phosphate and acetaldehyde from 2-deoxy-alpha-D-ribose 1-phosphate: step 1/2. Isomerase that catalyzes the conversion of deoxy-ribose 1-phosphate (dRib-1-P) and ribose 1-phosphate (Rib-1-P) to deoxy-ribose 5-phosphate (dRib-5-P) and ribose 5-phosphate (Rib-5-P), respectively. In Shouchella clausii (strain KSM-K16) (Alkalihalobacillus clausii), this protein is Phosphopentomutase.